We begin with the raw amino-acid sequence, 543 residues long: DM7 family protein GG19680 (543 aa).

Positions 415–430 (GETQEMDEAHPTKEES) are enriched in basic and acidic residues. The tract at residues 415-443 (GETQEMDEAHPTKEESKSEEEGEVQSGSQ) is disordered.

It belongs to the DM7 family.

In Drosophila erecta (Fruit fly), this protein is DM7 family protein GG19680.